We begin with the raw amino-acid sequence, 324 residues long: Nidogen-1 (324 aa).

The NIDO domain maps to 16-178 (PFLADLDTTD…GVWVFEIGSP (163 aa)). Residue Asn97 is glycosylated (N-linked (GlcNAc...) asparagine). Residues Tyr200 and Tyr205 each carry the sulfotyrosine modification. The disordered stretch occupies residues 219 to 259 (TQPFPSHSPRRGYPDPHNVPRTLAPSYEATERPHGIPTERT). The segment covering 247–259 (ATERPHGIPTERT) has biased composition (basic and acidic residues). The EGF-like domain maps to 295–324 (SQQTCANNRHQCSVHAECRDYATGFCCRCV). 2 cysteine pairs are disulfide-bonded: Cys299/Cys312 and Cys306/Cys321.

In terms of assembly, interacts with FBLN1. Interacts with LGALS3BP. Interacts with PLXDC1. Interacts with SVEP1. N- and O-glycosylated.

It is found in the secreted. The protein resides in the extracellular space. The protein localises to the extracellular matrix. Its subcellular location is the basement membrane. Sulfated glycoprotein widely distributed in basement membranes and tightly associated with laminin. Also binds to collagen IV and perlecan. It probably has a role in cell-extracellular matrix interactions. In Rattus norvegicus (Rat), this protein is Nidogen-1 (Nid1).